The chain runs to 795 residues: Mitochondrial intermediate peptidase (795 aa).

A mitochondrion-targeting transit peptide spans 1-22 (MLKTLNRRSWTCRQCIRILRRN). Histidine 561 provides a ligand contact to Zn(2+). Residue glutamate 562 is part of the active site. Positions 565 and 568 each coordinate Zn(2+).

It belongs to the peptidase M3 family. It depends on Zn(2+) as a cofactor.

The protein localises to the mitochondrion matrix. It carries out the reaction Release of an N-terminal octapeptide as second stage of processing of some proteins imported into the mitochondrion.. Its function is as follows. Cleaves proteins, imported into the mitochondrion, to their mature size. While most mitochondrial precursor proteins are processed to the mature form in one step by mitochondrial processing peptidase (MPP), the sequential cleavage by MIP of an octapeptide after initial processing by MPP is a required step for a subgroup of nuclear-encoded precursor proteins destined for the matrix or the inner membrane. This is Mitochondrial intermediate peptidase (OCT1) from Coccidioides immitis (strain RS) (Valley fever fungus).